Reading from the N-terminus, the 572-residue chain is Beta-fructofuranosidase, insoluble isoenzyme CWINV5 (572 aa).

An N-terminal signal peptide occupies residues 1–23; that stretch reads MANIVWCNIAMFLLVSLFLTDDA. Residues 54–57 and glutamine 73 each bind substrate; that span reads WMND. Aspartate 57 is an active-site residue. N-linked (GlcNAc...) asparagine glycosylation occurs at asparagine 84. 118 to 119 is a binding site for substrate; the sequence is WS. N-linked (GlcNAc...) asparagine glycans are attached at residues asparagine 152 and asparagine 179. Substrate contacts are provided by residues 184–185 and glutamate 239; that span reads RD. 2 N-linked (GlcNAc...) asparagine glycosylation sites follow: asparagine 333 and asparagine 438. Cysteine 434 and cysteine 481 form a disulfide bridge.

This sequence belongs to the glycosyl hydrolase 32 family. As to expression, expressed in flowers, and, to a lower extent, in leaves.

The protein localises to the secreted. It localises to the extracellular space. The protein resides in the apoplast. It is found in the cell wall. The enzyme catalyses Hydrolysis of terminal non-reducing beta-D-fructofuranoside residues in beta-D-fructofuranosides.. In Arabidopsis thaliana (Mouse-ear cress), this protein is Beta-fructofuranosidase, insoluble isoenzyme CWINV5 (CWINV5).